The sequence spans 300 residues: Transcription initiation factor IIB (300 aa).

A TFIIB-type zinc finger spans residues 3 to 34; the sequence is KQRVCPVCGSTEFIYDPERGEIVCARCGYVIE. Zn(2+) is bound by residues C7, C10, C26, and C29. A run of 2 repeats spans residues 114–197 and 210–291.

Belongs to the TFIIB family.

In terms of biological role, stabilizes TBP binding to an archaeal box-A promoter. Also responsible for recruiting RNA polymerase II to the pre-initiation complex (DNA-TBP-TFIIB). This is Transcription initiation factor IIB from Pyrococcus abyssi (strain GE5 / Orsay).